Consider the following 456-residue polypeptide: Exodeoxyribonuclease 7 large subunit (456 aa).

The protein belongs to the XseA family. As to quaternary structure, heterooligomer composed of large and small subunits.

It localises to the cytoplasm. The enzyme catalyses Exonucleolytic cleavage in either 5'- to 3'- or 3'- to 5'-direction to yield nucleoside 5'-phosphates.. Its function is as follows. Bidirectionally degrades single-stranded DNA into large acid-insoluble oligonucleotides, which are then degraded further into small acid-soluble oligonucleotides. The sequence is that of Exodeoxyribonuclease 7 large subunit from Shigella boydii serotype 18 (strain CDC 3083-94 / BS512).